A 242-amino-acid chain; its full sequence is MRPLTMSGHFLLAPIPESSSDYLLPKDIKLAVLGAGCVGKSAMIVRFLTKRFIGDYEPNTGKLYSRLVYVEGDQLSLQIQDTPGGIQAQDSLSQMVDSLTKSVHWAEGFLLVYSITDYESYQSIRPLYQHIRKVHPDGKAPIFIVGNKGDLLHARQVQTHEGLQLANELGSLFLEISTSENYEDVCDVFQHLCKEVIKVHRLGGERRRASVIPRPRSPNMQDLKRRFRQALSSKAKASSALG.

The interval 17–241 (ESSSDYLLPK…SSKAKASSAL (225 aa)) is small GTPase-like. Residues 34–41 (GAGCVGKS), 81–88 (DTPGGIQA), and 147–150 (NKGD) each bind GTP.

The protein belongs to the small GTPase superfamily. Ras family. Interacts with UBF/UBTF.

The protein localises to the nucleus. It is found in the nucleolus. It carries out the reaction GTP + H2O = GDP + phosphate + H(+). Its function is as follows. Regulator of rDNA transcription. Acts in cooperation UBF/UBTF and positively regulates RNA polymerase I transcription. The polypeptide is Ras-like protein family member 11A (Mus musculus (Mouse)).